Consider the following 252-residue polypeptide: Hydroxyacylglutathione hydrolase (252 aa).

Positions 54, 56, 58, 59, 113, 132, and 170 each coordinate Zn(2+).

Belongs to the metallo-beta-lactamase superfamily. Glyoxalase II family. As to quaternary structure, monomer. The cofactor is Zn(2+).

The catalysed reaction is an S-(2-hydroxyacyl)glutathione + H2O = a 2-hydroxy carboxylate + glutathione + H(+). Its pathway is secondary metabolite metabolism; methylglyoxal degradation; (R)-lactate from methylglyoxal: step 2/2. In terms of biological role, thiolesterase that catalyzes the hydrolysis of S-D-lactoyl-glutathione to form glutathione and D-lactic acid. The protein is Hydroxyacylglutathione hydrolase of Synechococcus sp. (strain JA-3-3Ab) (Cyanobacteria bacterium Yellowstone A-Prime).